A 471-amino-acid polypeptide reads, in one-letter code: Putative multidrug resistance protein MdtD (471 aa).

Residues 1–11 (MTDLPDSTRWQ) are Periplasmic-facing. Residues 12–32 (LWIVAFGFFMQSLDTTIVNTA) traverse the membrane as a helical segment. Residues 33 to 48 (LPSMAQSLGESPLHMH) are Cytoplasmic-facing. A helical membrane pass occupies residues 49-69 (MVIVSYVLTVAVMLPASGWLA). Residues 70–76 (DKVGVRN) are Periplasmic-facing. A helical transmembrane segment spans residues 77–97 (IFFTAIVLFTLGSLFCALSGT). The Cytoplasmic segment spans residues 98-101 (LNEL). A helical transmembrane segment spans residues 102 to 124 (LLARALQGVGGAMMVPVGRLTVM). Over 125–137 (KIVPREQYMAAMT) the chain is Periplasmic. The chain crosses the membrane as a helical span at residues 138 to 158 (FVTLPGQVGPLLGPALGGLLV). Residues 159-164 (EYASWH) are Cytoplasmic-facing. Residues 165–185 (WIFLINIPVGIIGAIATLMLM) form a helical membrane-spanning segment. The Periplasmic segment spans residues 186-196 (PNYTMQTRRFD). A helical membrane pass occupies residues 197-217 (LSGFLLLAVGMAVLTLALDGS). Over 218-224 (KGTGLSP) the chain is Cytoplasmic. The helical transmembrane segment at 225-245 (LAIAGLVAVGVVALVLYLLHA) threads the bilayer. The Periplasmic segment spans residues 246–262 (RNNNRALFSLKLFRTRT). A helical transmembrane segment spans residues 263-283 (FSLGLAGSFAGRIGSGMLPFM). Topologically, residues 284-285 (TP) are cytoplasmic. A helical membrane pass occupies residues 286 to 306 (VFLQIGLGFSPFHAGLMMIPM). The Periplasmic portion of the chain corresponds to 307–341 (VLGSMGMKRIVVQVVNRFGYRRVLVATTLGLSLVT). A helical transmembrane segment spans residues 342-362 (LLFMTTALLGWYYVLPFVLFL). Residues 363-395 (QGMVNSTRFSSMNTLTLKDLPDNLASSGNSLLS) are Cytoplasmic-facing. Residues 396 to 416 (MIMQLSMSIGVTIAGLLLGLF) traverse the membrane as a helical segment. Topologically, residues 417–430 (GSQHVSIDSGTTQT) are periplasmic. The helical transmembrane segment at 431–451 (VFMYTWLSMALIIALPAFIFA) threads the bilayer. At 452–471 (RVPNDTHQNVAISRRKRSAQ) the chain is on the cytoplasmic side.

This sequence belongs to the major facilitator superfamily. TCR/Tet family.

The protein resides in the cell inner membrane. This chain is Putative multidrug resistance protein MdtD, found in Escherichia coli (strain 55989 / EAEC).